A 451-amino-acid chain; its full sequence is Heme sensor protein HssS (451 aa).

2 helical membrane-spanning segments follow: residues 9–29 and 164–184; these read IAIY…LFTN and IFLA…VIAS. The 53-residue stretch at 186–238 folds into the HAMP domain; that stretch reads YSIIKPVTALKNATTRIMKGDFSTPIKQTRHDEIGTLQSRFNTMRQNLGQVDQ. In terms of domain architecture, Histidine kinase spans 246–451; sequence NVSHEVKTPL…KTQFIVKLFI (206 aa). At histidine 249 the chain carries Phosphohistidine; by autocatalysis.

Post-translationally, autophosphorylated.

It localises to the cell membrane. It carries out the reaction ATP + protein L-histidine = ADP + protein N-phospho-L-histidine.. Member of the two-component regulatory system HssS/HssR involved in intracellular heme homeostasis and tempering of staphylococcal virulence. HssS functions as a heme sensor histidine kinase which is autophosphorylated at a histidine residue and transfers its phosphate group to an aspartate residue of HssR. HssR/HssS activates the expression of HrtAB, an efflux pump, in response to extracellular heme, hemin, hemoglobin or blood. The protein is Heme sensor protein HssS (hssS) of Staphylococcus epidermidis (strain ATCC 35984 / DSM 28319 / BCRC 17069 / CCUG 31568 / BM 3577 / RP62A).